Here is a 196-residue protein sequence, read N- to C-terminus: Putative HTH-type transcriptional regulator in exeN 3'region (196 aa).

The HTH luxR-type domain maps to 120 to 185 (ASVGGDRLTR…ELFNLFLNHL (66 aa)). Positions 144 to 163 (TEAIAAALGIGNGTVKNHRK) form a DNA-binding region, H-T-H motif.

The chain is Putative HTH-type transcriptional regulator in exeN 3'region from Aeromonas salmonicida.